The sequence spans 111 residues: Cytochrome b-c1 complex subunit 7 (111 aa).

An N-acetylalanine modification is found at Ala-2. The residue at position 12 (Lys-12) is an N6-acetyllysine; alternate. Residue Lys-12 is modified to N6-succinyllysine; alternate. Lys-19 bears the N6-acetyllysine mark. Lys-78 carries the post-translational modification N6-acetyllysine; alternate. Position 78 is an N6-succinyllysine; alternate (Lys-78). Lys-83 and Lys-96 each carry N6-acetyllysine.

The protein belongs to the UQCRB/QCR7 family. In terms of assembly, component of the ubiquinol-cytochrome c oxidoreductase (cytochrome b-c1 complex, complex III, CIII), a multisubunit enzyme composed of 11 subunits. The complex is composed of 3 respiratory subunits cytochrome b, cytochrome c1 and Rieske protein UQCRFS1, 2 core protein subunits UQCRC1/QCR1 and UQCRC2/QCR2, and 6 low-molecular weight protein subunits UQCRH/QCR6, UQCRB/QCR7, UQCRQ/QCR8, UQCR10/QCR9, UQCR11/QCR10 and subunit 9, the cleavage product of Rieske protein UQCRFS1. The complex exists as an obligatory dimer and forms supercomplexes (SCs) in the inner mitochondrial membrane with NADH-ubiquinone oxidoreductase (complex I, CI) and cytochrome c oxidase (complex IV, CIV), resulting in different assemblies (supercomplex SCI(1)III(2)IV(1) and megacomplex MCI(2)III(2)IV(2)).

It localises to the mitochondrion inner membrane. Its function is as follows. Component of the ubiquinol-cytochrome c oxidoreductase, a multisubunit transmembrane complex that is part of the mitochondrial electron transport chain which drives oxidative phosphorylation. The respiratory chain contains 3 multisubunit complexes succinate dehydrogenase (complex II, CII), ubiquinol-cytochrome c oxidoreductase (cytochrome b-c1 complex, complex III, CIII) and cytochrome c oxidase (complex IV, CIV), that cooperate to transfer electrons derived from NADH and succinate to molecular oxygen, creating an electrochemical gradient over the inner membrane that drives transmembrane transport and the ATP synthase. The cytochrome b-c1 complex catalyzes electron transfer from ubiquinol to cytochrome c, linking this redox reaction to translocation of protons across the mitochondrial inner membrane, with protons being carried across the membrane as hydrogens on the quinol. In the process called Q cycle, 2 protons are consumed from the matrix, 4 protons are released into the intermembrane space and 2 electrons are passed to cytochrome c. The chain is Cytochrome b-c1 complex subunit 7 (UQCRB) from Homo sapiens (Human).